Here is an 848-residue protein sequence, read N- to C-terminus: Coiled-coil domain-containing protein 110 (848 aa).

Residues 41 to 62 (SEGVKESGGNEPEYGCASEPEN) form a disordered region. Residues 442–794 (LQNYLKESLQ…LSDKVSSQNN (353 aa)) are a coiled coil. A Phosphoserine modification is found at serine 620.

The protein localises to the nucleus. In Mus musculus (Mouse), this protein is Coiled-coil domain-containing protein 110 (Ccdc110).